The chain runs to 235 residues: Small ribosomal subunit protein eS4 (235 aa).

The S4 RNA-binding domain occupies 37–100; it reads LPLGIIIRDI…NEAYRMLQDE (64 aa).

It belongs to the eukaryotic ribosomal protein eS4 family.

The sequence is that of Small ribosomal subunit protein eS4 from Methanosarcina acetivorans (strain ATCC 35395 / DSM 2834 / JCM 12185 / C2A).